Reading from the N-terminus, the 195-residue chain is Porimin (195 aa).

Positions 1-23 are cleaved as a signal peptide; sequence MALCARAALLLGVLQVLALLGAA. At 24-152 the chain is on the extracellular side; sequence QDPTDAQGSA…PTKGKGSKFD (129 aa). N-linked (GlcNAc...) asparagine glycosylation is found at Asn-36, Asn-45, Asn-51, Asn-59, Asn-109, and Asn-115. The segment at 99–127 is disordered; that stretch reads VTPTASKSTPNASASPNSTHTSASMTTPA. A compositionally biased stretch (polar residues) spans 101 to 126; the sequence is PTASKSTPNASASPNSTHTSASMTTP. The helical transmembrane segment at 153 to 173 threads the bilayer; it reads AGSFVGGIVLTLGVLSILYIG. Topologically, residues 174-195 are cytoplasmic; it reads CKMYYSRRGIRYRSIDEHDAII. Ser-187 is modified (phosphoserine).

Belongs to the CD164 family.

The protein resides in the membrane. In terms of biological role, implicated in oncotic cell death, characterized by cell swelling, organelle swelling, vacuolization and increased membrane permeability. This is Porimin (Tmem123) from Mus musculus (Mouse).